We begin with the raw amino-acid sequence, 670 residues long: Transketolase (670 aa).

Position 31 (histidine 31) interacts with substrate. Residues histidine 71 and 120 to 122 (GPL) each bind thiamine diphosphate. Aspartate 161 contributes to the Mg(2+) binding site. Residues glycine 162 and asparagine 191 each contribute to the thiamine diphosphate site. Mg(2+) contacts are provided by asparagine 191 and isoleucine 193. Substrate is bound by residues histidine 268, arginine 362, and serine 389. Residue histidine 268 coordinates thiamine diphosphate. Glutamate 416 serves as the catalytic Proton donor. Residue phenylalanine 443 participates in thiamine diphosphate binding. Positions 467, 475, and 528 each coordinate substrate.

In terms of assembly, homodimer. It depends on Mg(2+) as a cofactor. The cofactor is Ca(2+). Mn(2+) is required as a cofactor. Requires Co(2+) as cofactor. Thiamine diphosphate serves as cofactor.

It catalyses the reaction D-sedoheptulose 7-phosphate + D-glyceraldehyde 3-phosphate = aldehydo-D-ribose 5-phosphate + D-xylulose 5-phosphate. Functionally, catalyzes the transfer of a two-carbon ketol group from a ketose donor to an aldose acceptor, via a covalent intermediate with the cofactor thiamine pyrophosphate. The sequence is that of Transketolase (tkt) from Nostoc sp. (strain PCC 7120 / SAG 25.82 / UTEX 2576).